Here is a 245-residue protein sequence, read N- to C-terminus: Bis(5'-nucleosyl)-tetraphosphatase PrpE [asymmetrical] (245 aa).

This sequence belongs to the PrpE family. It depends on Ni(2+) as a cofactor.

The enzyme catalyses P(1),P(4)-bis(5'-guanosyl) tetraphosphate + H2O = GMP + GTP + 2 H(+). In terms of biological role, asymmetrically hydrolyzes Ap4p to yield AMP and ATP. The chain is Bis(5'-nucleosyl)-tetraphosphatase PrpE [asymmetrical] from Anoxybacillus flavithermus (strain DSM 21510 / WK1).